The following is a 311-amino-acid chain: CD-NTase-associated protein 6 (311 aa).

Residues 84–89 (GSGKTE) and 215–216 (RR) contribute to the ATP site.

The protein belongs to the AAA ATPase family. In terms of assembly, homohexamer. Forms a 1:1:6 CdnC:Cap7:Cap6 complex.

Its function is as follows. Regulates complex assembly in a CBASS antivirus system. CBASS (cyclic oligonucleotide-based antiphage signaling system) provides immunity against bacteriophage. The CD-NTase protein synthesizes cyclic nucleotides in response to infection; these serve as specific second messenger signals. The signals activate a diverse range of effectors, leading to bacterial cell death and thus abortive phage infection. A type III-C(AAA) CBASS system. Functionally, binds and disassembles an active CdnC:Cap7 (Cap7 is also called HORMA) complex, inhibiting the complex's ability to synthesize cyclic nucleotide second messengers. An AAA+-ATPase remodeler, in the absence of foreign threat Cap6 (also called Trip13) probably maintains the Cap7 protein in its open, inactive state. Once activated (presumably by a bacteriophage protein) Cap7 binds to and activates its cognate CD-NTase (CdnC in this bacteria) to synthesize cAAA, a cyclic nucleotide second messenger. cAAA activates the NucC endonuclease which degrades all DNA in the infected cell, causing cell death and abortive phage infection. In terms of biological role, protects E.coli strain JP313 against bacteriophage lambda cI- infection. When the cdnC-cap7-cap6-nucC operon is transformed into a susceptible E.coli strain it confers bacteriophage lambda cI- immunity. Mutations in the sensor (Cap7 also called HORMA) or effector proteins (CdnC, NucC) but not the disassembly protein (Cap6 also called Trip13) no longer confer immunity. The presence of the intact operon leads to culture collapse and cell death, which occurs before the phage has finished its replication cycle, thus protecting non-infected bacteria by aborting the phage infection and preventing its propagation. The chain is CD-NTase-associated protein 6 from Escherichia coli (strain MS 115-1).